The sequence spans 139 residues: Large ribosomal subunit protein uL22 (139 aa).

Residues 1–21 (MTAPTPEFRNKKQRKQQVKLR) are disordered.

Belongs to the universal ribosomal protein uL22 family. As to quaternary structure, part of the 50S ribosomal subunit.

Functionally, this protein binds specifically to 23S rRNA; its binding is stimulated by other ribosomal proteins, e.g. L4, L17, and L20. It is important during the early stages of 50S assembly. It makes multiple contacts with different domains of the 23S rRNA in the assembled 50S subunit and ribosome. Its function is as follows. The globular domain of the protein is located near the polypeptide exit tunnel on the outside of the subunit, while an extended beta-hairpin is found that lines the wall of the exit tunnel in the center of the 70S ribosome. The polypeptide is Large ribosomal subunit protein uL22 (Deinococcus deserti (strain DSM 17065 / CIP 109153 / LMG 22923 / VCD115)).